We begin with the raw amino-acid sequence, 371 residues long: Zygote-specific protein 3 (371 aa).

Positions 1-24 are cleaved as a signal peptide; sequence MLRSAGRVAAVALLALFALGCVSA. Residue Asn41 is glycosylated (N-linked (GlcNAc...) asparagine). 2 ANK repeats span residues 62 to 91 and 94 to 123; these read TRRL…LARV and GTTT…DPNA. WW domains are found at residues 159–187 and 283–313; these read EPGA…WAVP and YATP…WELP.

It is found in the endoplasmic reticulum lumen. In terms of biological role, may have a role in the remodeling of the endoplasmic reticulum upon zygote formation. This is Zygote-specific protein 3 (ZYS3) from Chlamydomonas reinhardtii (Chlamydomonas smithii).